A 213-amino-acid chain; its full sequence is Orotate phosphoribosyltransferase (213 aa).

Lysine 26 contributes to the 5-phospho-alpha-D-ribose 1-diphosphate binding site. 34-35 serves as a coordination point for orotate; it reads FF. Residues 72-73, arginine 99, lysine 100, lysine 103, histidine 105, and 124-132 each bind 5-phospho-alpha-D-ribose 1-diphosphate; these read YK and DDVITAGTA. Positions 128 and 156 each coordinate orotate.

This sequence belongs to the purine/pyrimidine phosphoribosyltransferase family. PyrE subfamily. Homodimer. Mg(2+) is required as a cofactor.

The enzyme catalyses orotidine 5'-phosphate + diphosphate = orotate + 5-phospho-alpha-D-ribose 1-diphosphate. Its pathway is pyrimidine metabolism; UMP biosynthesis via de novo pathway; UMP from orotate: step 1/2. Its function is as follows. Catalyzes the transfer of a ribosyl phosphate group from 5-phosphoribose 1-diphosphate to orotate, leading to the formation of orotidine monophosphate (OMP). The polypeptide is Orotate phosphoribosyltransferase (Escherichia coli O127:H6 (strain E2348/69 / EPEC)).